A 554-amino-acid chain; its full sequence is ATP synthase subunit alpha (554 aa).

Residue 172–179 (GDRKTGKT) participates in ATP binding. Residues 528-554 (LDEEELEKESVKVKKPAPEKKAKKEQK) are disordered. Residues 535–554 (KESVKVKKPAPEKKAKKEQK) show a composition bias toward basic and acidic residues.

It belongs to the ATPase alpha/beta chains family. In terms of assembly, F-type ATPases have 2 components, CF(1) - the catalytic core - and CF(0) - the membrane proton channel. CF(1) has five subunits: alpha(3), beta(3), gamma(1), delta(1), epsilon(1). CF(0) has three main subunits: a(1), b(2) and c(9-12). The alpha and beta chains form an alternating ring which encloses part of the gamma chain. CF(1) is attached to CF(0) by a central stalk formed by the gamma and epsilon chains, while a peripheral stalk is formed by the delta and b chains.

It is found in the cell membrane. It catalyses the reaction ATP + H2O + 4 H(+)(in) = ADP + phosphate + 5 H(+)(out). Produces ATP from ADP in the presence of a proton gradient across the membrane. The alpha chain is a regulatory subunit. The chain is ATP synthase subunit alpha from Mycolicibacterium paratuberculosis (strain ATCC BAA-968 / K-10) (Mycobacterium paratuberculosis).